The sequence spans 338 residues: tRNA N6-adenosine threonylcarbamoyltransferase (338 aa).

The Fe cation site is built by histidine 110 and histidine 114. Substrate is bound by residues 132-136, aspartate 165, glycine 178, and asparagine 274; that span reads LLSGG. Aspartate 298 is a binding site for Fe cation.

This sequence belongs to the KAE1 / TsaD family. The cofactor is Fe(2+).

The protein localises to the cytoplasm. The enzyme catalyses L-threonylcarbamoyladenylate + adenosine(37) in tRNA = N(6)-L-threonylcarbamoyladenosine(37) in tRNA + AMP + H(+). Its function is as follows. Required for the formation of a threonylcarbamoyl group on adenosine at position 37 (t(6)A37) in tRNAs that read codons beginning with adenine. Is involved in the transfer of the threonylcarbamoyl moiety of threonylcarbamoyl-AMP (TC-AMP) to the N6 group of A37, together with TsaE and TsaB. TsaD likely plays a direct catalytic role in this reaction. The chain is tRNA N6-adenosine threonylcarbamoyltransferase from Borrelia garinii subsp. bavariensis (strain ATCC BAA-2496 / DSM 23469 / PBi) (Borreliella bavariensis).